A 67-amino-acid polypeptide reads, in one-letter code: MEGISIAKLLIIGALIVLLFGTNKLRSLGGDLGSAIKGFKKAMKDEDTSAARTTAEETPAERVSHKD.

The chain crosses the membrane as a helical span at residues 1-21; it reads MEGISIAKLLIIGALIVLLFG. The interval 44 to 67 is disordered; that stretch reads KDEDTSAARTTAEETPAERVSHKD.

This sequence belongs to the TatA/E family. TatE subfamily.

The protein localises to the cell inner membrane. Functionally, part of the twin-arginine translocation (Tat) system that transports large folded proteins containing a characteristic twin-arginine motif in their signal peptide across membranes. TatE shares overlapping functions with TatA. The sequence is that of Probable Sec-independent protein translocase protein TatE from Pantoea ananatis (strain LMG 20103).